A 318-amino-acid polypeptide reads, in one-letter code: Acetyl-coenzyme A carboxylase carboxyl transferase subunit alpha (318 aa).

Residues 39–293 enclose the CoA carboxyltransferase C-terminal domain; the sequence is KLEKKVDKMR…HEALARHLKE (255 aa).

Belongs to the AccA family. As to quaternary structure, acetyl-CoA carboxylase is a heterohexamer composed of biotin carboxyl carrier protein (AccB), biotin carboxylase (AccC) and two subunits each of ACCase subunit alpha (AccA) and ACCase subunit beta (AccD).

It localises to the cytoplasm. The enzyme catalyses N(6)-carboxybiotinyl-L-lysyl-[protein] + acetyl-CoA = N(6)-biotinyl-L-lysyl-[protein] + malonyl-CoA. Its pathway is lipid metabolism; malonyl-CoA biosynthesis; malonyl-CoA from acetyl-CoA: step 1/1. Component of the acetyl coenzyme A carboxylase (ACC) complex. First, biotin carboxylase catalyzes the carboxylation of biotin on its carrier protein (BCCP) and then the CO(2) group is transferred by the carboxyltransferase to acetyl-CoA to form malonyl-CoA. The protein is Acetyl-coenzyme A carboxylase carboxyl transferase subunit alpha of Geobacter metallireducens (strain ATCC 53774 / DSM 7210 / GS-15).